We begin with the raw amino-acid sequence, 171 residues long: 3-hydroxydecanoyl-[acyl-carrier-protein] dehydratase (171 aa).

His70 is a catalytic residue.

The protein belongs to the thioester dehydratase family. FabA subfamily. In terms of assembly, homodimer.

It is found in the cytoplasm. The enzyme catalyses a (3R)-hydroxyacyl-[ACP] = a (2E)-enoyl-[ACP] + H2O. The catalysed reaction is (3R)-hydroxydecanoyl-[ACP] = (2E)-decenoyl-[ACP] + H2O. It carries out the reaction (2E)-decenoyl-[ACP] = (3Z)-decenoyl-[ACP]. It participates in lipid metabolism; fatty acid biosynthesis. Necessary for the introduction of cis unsaturation into fatty acids. Catalyzes the dehydration of (3R)-3-hydroxydecanoyl-ACP to E-(2)-decenoyl-ACP and then its isomerization to Z-(3)-decenoyl-ACP. Can catalyze the dehydratase reaction for beta-hydroxyacyl-ACPs with saturated chain lengths up to 16:0, being most active on intermediate chain length. The chain is 3-hydroxydecanoyl-[acyl-carrier-protein] dehydratase from Xanthomonas oryzae pv. oryzae (strain MAFF 311018).